A 50-amino-acid chain; its full sequence is Protein HokA (50 aa).

Residues 7–24 (LLSLIVICFTLLFFTWMI) form a helical membrane-spanning segment.

Belongs to the Hok/Gef family.

The protein localises to the cell inner membrane. Toxic component of a type I toxin-antitoxin (TA) system. When overexpressed kills cells within minutes; causes collapse of the transmembrane potential and arrest of respiration. Its toxic effect is probably neutralized by antisense antitoxin RNA SokA. The sequence is that of Protein HokA from Escherichia coli (strain K12).